A 308-amino-acid chain; its full sequence is Glycerol-3-phosphate dehydrogenase [NAD(P)+] (308 aa).

Trp-15, Arg-35, Arg-36, and Lys-83 together coordinate NADPH. Sn-glycerol 3-phosphate-binding residues include Lys-83 and Gly-111. Ser-115 is a binding site for NADPH. 5 residues coordinate sn-glycerol 3-phosphate: Lys-166, Asp-219, Ser-229, Arg-230, and Asn-231. Catalysis depends on Lys-166, which acts as the Proton acceptor. Arg-230 is a binding site for NADPH. Glu-256 lines the NADPH pocket.

The protein belongs to the NAD-dependent glycerol-3-phosphate dehydrogenase family.

Its subcellular location is the cytoplasm. The catalysed reaction is sn-glycerol 3-phosphate + NAD(+) = dihydroxyacetone phosphate + NADH + H(+). It carries out the reaction sn-glycerol 3-phosphate + NADP(+) = dihydroxyacetone phosphate + NADPH + H(+). The protein operates within membrane lipid metabolism; glycerophospholipid metabolism. Catalyzes the reduction of the glycolytic intermediate dihydroxyacetone phosphate (DHAP) to sn-glycerol 3-phosphate (G3P), the key precursor for phospholipid synthesis. The chain is Glycerol-3-phosphate dehydrogenase [NAD(P)+] from Synechococcus elongatus (strain ATCC 33912 / PCC 7942 / FACHB-805) (Anacystis nidulans R2).